We begin with the raw amino-acid sequence, 120 residues long: Transcription elongation factor 1 homolog (120 aa).

Residues C25, C28, C49, and C52 each coordinate Zn(2+). Acidic residues predominate over residues 84–110; that stretch reads EDDVVQEEEEEVEEEEEEEEEEDDEDD. Positions 84–120 are disordered; the sequence is EDDVVQEEEEEVEEEEEEEEEEDDEDDHVSVKRKYNF.

It belongs to the ELOF1 family.

It is found in the nucleus. Its function is as follows. Transcription elongation factor implicated in the maintenance of proper chromatin structure in actively transcribed regions. This chain is Transcription elongation factor 1 homolog, found in Arabidopsis thaliana (Mouse-ear cress).